Reading from the N-terminus, the 625-residue chain is Endo-1,4-beta-xylanase A (625 aa).

The signal sequence occupies residues 1–19 (MKLFQIFPLLLSLTSVTLA). The GH11 1 domain occupies 35–231 (VSTGHDVKKI…TGGGCSGSVE (197 aa)). The segment at 245–283 (DGKSKGGSSSGGSNGQGLGNGQGNGQGQGNGQGQSATGS) is disordered. Positions 252-276 (SSSGGSNGQGLGNGQGNGQGQGNGQ) are enriched in gly residues. A linker region spans residues 255 to 279 (GGSNGQGLGNGQGNGQGQGNGQGQS). Tandem repeats lie at residues 259–268 (GQGLGNGQGN) and 269–278 (GQGQGNGQGQ). A 2 X 10 AA tandem repeats of G-Q-G-[LQ]-G-N-G-Q-G-[NQ] region spans residues 259–278 (GQGLGNGQGNGQGQGNGQGQ). 2 consecutive CBM10 domains span residues 285–324 (KCPS…CGCG) and 332–371 (NCPS…CGCG). The linker stretch occupies residues 374–403 (NTTPTTTTKKSNNSQPTQGQSNNNSSTNTN). Residues 379 to 399 (TTTKKSNNSQPTQGQSNNNSS) are disordered. The GH11 2 domain maps to 416–617 (TETSNKVGSI…GSGTSGTADF (202 aa)). Glu510 serves as the catalytic Nucleophile. Glu603 (proton donor) is an active-site residue.

This sequence belongs to the glycosyl hydrolase 11 (cellulase G) family.

It catalyses the reaction Endohydrolysis of (1-&gt;4)-beta-D-xylosidic linkages in xylans.. It participates in glycan degradation; xylan degradation. Hydrolyzes 1,4-beta linked polysaccharide backbones of xylans, one of the major hemicellulose components in hardwoods and softwoods. It is more active against xylopentaose than xylotetraose, has trace activity against xylotriose. The major products released from hydrolysis of xylooligosaccharides are xylobiose and xylotriose. The reiterated 40 AA domain is involved in binding the cellulase-hemicellulase complex. This Piromyces sp protein is Endo-1,4-beta-xylanase A (XYNA).